The sequence spans 546 residues: MFS-type transporter patC (546 aa).

The segment covering 1–15 has biased composition (polar residues); sequence MSIDASPSESVLESQ. The tract at residues 1–29 is disordered; that stretch reads MSIDASPSESVLESQTPDRVDESIPIKAE. A compositionally biased stretch (basic and acidic residues) spans 16-29; sequence TPDRVDESIPIKAE. 14 helical membrane passes run 41-61, 89-109, 113-133, 143-163, 171-191, 203-223, 245-265, 277-297, 318-338, 350-370, 379-399, 416-436, 447-467, and 515-535; these read IVGFRWLLVCIAVFSANLLYG, VGFTLGSVVFILPLGKAYAIF, WLFLGCLTMFAAGSALCGAAP, VWAGAGGAGMYLGNLNLITIL, VYVGLVGLIYGTGCILGPIIG, WSFYLNLVIFGVMSPIYVFLL, WVGTVLSAGMHISIILFIVFG, IALYVVSAVLTIAFVLSQYFC, LLLYIIMACGGAALFVAVYYI, GIMSAVRLLPFVCFYVATILL, GYFIIWYLMSGVFMLIGAVLM, ILMGLGMTTTQAAYAVGPAIV, FMNIGQGQSQLLGLAIASAIF, and VIVSSISDVYVMAISAGALYV.

This sequence belongs to the major facilitator superfamily. TCR/Tet family.

Its subcellular location is the vacuole membrane. The protein localises to the cell membrane. MFS-type transporter; part of the gene cluster that mediates the biosynthesis of patulin, an acetate-derived tetraketide mycotoxin produced by several fungal species that shows antimicrobial properties against several bacteria. May be involved in the secretion of E-ascladiol to be converted to patulin by the secreted patulin synthase patE. The sequence is that of MFS-type transporter patC from Penicillium expansum (Blue mold rot fungus).